The following is a 377-amino-acid chain: Succinyl-diaminopimelate desuccinylase (377 aa).

A Zn(2+)-binding site is contributed by His67. Asp69 is an active-site residue. Residue Asp100 coordinates Zn(2+). The Proton acceptor role is filled by Glu134. Positions 135, 163, and 349 each coordinate Zn(2+).

The protein belongs to the peptidase M20A family. DapE subfamily. Homodimer. Zn(2+) serves as cofactor. It depends on Co(2+) as a cofactor.

It catalyses the reaction N-succinyl-(2S,6S)-2,6-diaminopimelate + H2O = (2S,6S)-2,6-diaminopimelate + succinate. Its pathway is amino-acid biosynthesis; L-lysine biosynthesis via DAP pathway; LL-2,6-diaminopimelate from (S)-tetrahydrodipicolinate (succinylase route): step 3/3. In terms of biological role, catalyzes the hydrolysis of N-succinyl-L,L-diaminopimelic acid (SDAP), forming succinate and LL-2,6-diaminopimelate (DAP), an intermediate involved in the bacterial biosynthesis of lysine and meso-diaminopimelic acid, an essential component of bacterial cell walls. This is Succinyl-diaminopimelate desuccinylase from Actinobacillus pleuropneumoniae serotype 5b (strain L20).